The chain runs to 422 residues: Histidine--tRNA ligase (422 aa).

The protein belongs to the class-II aminoacyl-tRNA synthetase family. As to quaternary structure, homodimer.

The protein localises to the cytoplasm. It catalyses the reaction tRNA(His) + L-histidine + ATP = L-histidyl-tRNA(His) + AMP + diphosphate + H(+). In Aliivibrio fischeri (strain ATCC 700601 / ES114) (Vibrio fischeri), this protein is Histidine--tRNA ligase.